A 235-amino-acid chain; its full sequence is UPF0758 protein Swol_1642 (235 aa).

One can recognise an MPN domain in the interval 109 to 235 (IIKSPEDVQE…YCSLKARGLI (127 aa)). Zn(2+) is bound by residues His184, His186, and Asp197. The JAMM motif motif lies at 184–197 (HNHPSGDPTPSQED).

Belongs to the UPF0758 family.

The sequence is that of UPF0758 protein Swol_1642 from Syntrophomonas wolfei subsp. wolfei (strain DSM 2245B / Goettingen).